The primary structure comprises 179 residues: GTP-dependent dephospho-CoA kinase (179 aa).

The GTP site is built by Asp49, Val50, Val51, Asp68, Lys70, and Glu126.

This sequence belongs to the GTP-dependent DPCK family.

The catalysed reaction is 3'-dephospho-CoA + GTP = GDP + CoA + H(+). Its pathway is cofactor biosynthesis; coenzyme A biosynthesis. Its function is as follows. Catalyzes the GTP-dependent phosphorylation of the 3'-hydroxyl group of dephosphocoenzyme A to form coenzyme A (CoA). In Pyrococcus abyssi (strain GE5 / Orsay), this protein is GTP-dependent dephospho-CoA kinase.